Consider the following 113-residue polypeptide: Putative anti-sigma factor antagonist TM1081 homolog (113 aa).

The STAS domain maps to 1-110; it reads MFPYKIVEDV…DTISEALEEV (110 aa). Ser-55 bears the Phosphoserine mark.

The protein belongs to the anti-sigma-factor antagonist family. Post-translationally, phosphorylated on a serine residue.

In terms of biological role, in the phosphorylated form it could act as an anti-anti-sigma factor that counteracts an anti-sigma factor and thus releases a sigma factor from inhibition. This chain is Putative anti-sigma factor antagonist TM1081 homolog, found in Thermotoga neapolitana.